A 306-amino-acid chain; its full sequence is Pantothenate kinase (306 aa).

Position 91–98 (91–98 (GSVAVGKS)) interacts with ATP.

This sequence belongs to the prokaryotic pantothenate kinase family.

It is found in the cytoplasm. It catalyses the reaction (R)-pantothenate + ATP = (R)-4'-phosphopantothenate + ADP + H(+). It functions in the pathway cofactor biosynthesis; coenzyme A biosynthesis; CoA from (R)-pantothenate: step 1/5. This is Pantothenate kinase from Streptococcus suis (strain 98HAH33).